The chain runs to 221 residues: Transcription factor otaR1 (221 aa).

Residues 109 to 146 (ASRSRPAFSTPASRPGLSSAKSPSLGATSPGSMDRSEE) form a disordered region. The span at 127–139 (SAKSPSLGATSPG) shows a compositional bias: polar residues. A basic motif region spans residues 152 to 192 (KKYHEKYKERNRLAAGRSRQKQADLINLLQAEQQEEERRRK). Residues 152–215 (KKYHEKYKER…VDMKQELQHH (64 aa)) enclose the bZIP domain. The leucine-zipper stretch occupies residues 198–212 (IANMQKELVDMKQEL).

The protein localises to the nucleus. Its function is as follows. Transcription factor; part of the gene cluster that mediates the biosynthesis of ochratoxin A (OTA), a mycotoxin demonstrated to have nephrotoxic, immunotoxic, genotoxic, neurotoxic, and teratogenic properties. Positively regulates the expression of the OTA biosynthetic genes and subsequent production of OTA. Probably binds to conserved 5'-ACGT-3' bZIP binding motifs found in multiple copies (3 to 4) in the promoters of the OTA biosynthetic genes. Acts not only as a pathway-specific regulator of the OTA cluster but also binds at other chromosomal positions outside the OTA cluster and can act as a broad regulator. Negatively regulates pathogenicity and plays a critical role in tolerance to reactive oxygen species (ROS). The protein is Transcription factor otaR1 of Aspergillus niger (strain ATCC MYA-4892 / CBS 513.88 / FGSC A1513).